Consider the following 203-residue polypeptide: MLKLRKVAITGGLSCGKSSVCRILKELGAYAVSADEIVHHLLSSDVNVSQKVVDLLGKSILKNNQIHRSLLAERVFQNYRLLTGLEKILHPAVYGEIEQQYQKQQDSKNQFPFFIAEVPLLYESDGAKFFDTIISVVADPEISLQRFKTHTHKSEKEFQSRMARQISPLEKAIRADYVVLNNGTLSELQQSLRELYQELKIYI.

A DPCK domain is found at 6–203 (KVAITGGLSC…ELYQELKIYI (198 aa)). 14–19 (SCGKSS) provides a ligand contact to ATP.

This sequence belongs to the CoaE family.

It localises to the cytoplasm. It catalyses the reaction 3'-dephospho-CoA + ATP = ADP + CoA + H(+). It functions in the pathway cofactor biosynthesis; coenzyme A biosynthesis; CoA from (R)-pantothenate: step 5/5. Functionally, catalyzes the phosphorylation of the 3'-hydroxyl group of dephosphocoenzyme A to form coenzyme A. In Protochlamydia amoebophila (strain UWE25), this protein is Dephospho-CoA kinase.